Reading from the N-terminus, the 89-residue chain is Small ribosomal subunit protein uS14A (89 aa).

It belongs to the universal ribosomal protein uS14 family. As to quaternary structure, part of the 30S ribosomal subunit. Contacts proteins S3 and S10.

Binds 16S rRNA, required for the assembly of 30S particles and may also be responsible for determining the conformation of the 16S rRNA at the A site. The polypeptide is Small ribosomal subunit protein uS14A (Levilactobacillus brevis (strain ATCC 367 / BCRC 12310 / CIP 105137 / JCM 1170 / LMG 11437 / NCIMB 947 / NCTC 947) (Lactobacillus brevis)).